The following is a 91-amino-acid chain: Small ribosomal subunit protein bS20 (91 aa).

The span at 1 to 21 (MPLHKSAEKRLRQSARRNERN) shows a compositional bias: basic and acidic residues. 2 disordered regions span residues 1–25 (MPLHKSAEKRLRQSARRNERNRARK) and 71–91 (NKASRKKSQLSRMLNAYAQKD).

The protein belongs to the bacterial ribosomal protein bS20 family.

Its function is as follows. Binds directly to 16S ribosomal RNA. The sequence is that of Small ribosomal subunit protein bS20 from Prosthecochloris aestuarii (strain DSM 271 / SK 413).